The primary structure comprises 312 residues: HTH-type transcriptional regulator TdcA (312 aa).

An HTH lysR-type domain is found at 7-64 (PKTQHLVVFQEVIRSGSIGSAAKELGLTQPAVSKIINDIEDYFGVELVVRKNTGVTLT). Residues 24–43 (IGSAAKELGLTQPAVSKIIN) constitute a DNA-binding region (H-T-H motif).

It belongs to the LysR transcriptional regulatory family.

It functions in the pathway amino-acid degradation; L-threonine degradation via propanoate pathway [regulation]. Transcriptional activator for the tdcABCDE operon. The chain is HTH-type transcriptional regulator TdcA (tdcA) from Escherichia coli O157:H7.